Reading from the N-terminus, the 68-residue chain is MKRLELRAKQIRQMSKEERQETLKNLKESLLHERALISMGGSSPSPGKVRGIRRQIARLLTVEREEKR.

Belongs to the universal ribosomal protein uL29 family.

The sequence is that of Large ribosomal subunit protein uL29 (rpl29) from Thermoplasma acidophilum (strain ATCC 25905 / DSM 1728 / JCM 9062 / NBRC 15155 / AMRC-C165).